The following is a 1006-amino-acid chain: D-2-hydroxyglutarate dehydrogenase (1006 aa).

Positions 47 to 279 (YQRLPQAAVF…VEAKLNVLPI (233 aa)) constitute an FAD-binding PCMH-type domain. (R)-2-hydroxyglutarate-binding residues include Arg397 and His495. The region spanning 655-687 (SHEVYDAMAGCLACKSCAGQCPIKVNVPDFRSR) is the 4Fe-4S ferredoxin-type domain. Residues Cys665, Cys668, Cys671, and Cys675 each coordinate [4Fe-4S] cluster.

This sequence in the N-terminal section; belongs to the FAD-binding oxidoreductase/transferase type 4 family. [4Fe-4S] cluster is required as a cofactor. The cofactor is FAD.

The catalysed reaction is (R)-2-hydroxyglutarate + A = 2-oxoglutarate + AH2. Its pathway is amino-acid degradation. Its function is as follows. Catalyzes the oxidation of D-2-hydroxyglutarate (D-2-HGA) to 2-oxoglutarate. Is involved in a D-lysine catabolic pathway. This is D-2-hydroxyglutarate dehydrogenase from Pseudomonas putida (strain ATCC 47054 / DSM 6125 / CFBP 8728 / NCIMB 11950 / KT2440).